We begin with the raw amino-acid sequence, 412 residues long: Burnettramic acids biosynthesis cluster protein E (412 aa).

Disordered stretches follow at residues 1–66, 308–342, and 386–412; these read MAIA…KKIR, RNPT…SLAT, and SRAE…AAKG. Acidic residues predominate over residues 36–58; it reads EDEQWALDELQDELCQEEPSDSE. Polar residues predominate over residues 395-404; that stretch reads EATTEPSVQS.

It participates in mycotoxin biosynthesis. In terms of biological role, part of the gene cluster that mediates the biosynthesis of burnettramic acids, an unusual class of bolaamphiphilic pyrrolizidinediones that display potent antibacterial, antifungal, and cytotoxic activities. The first step of the biosynthesis of burnettramic acids is the hydroxylation of proline by the proline hydroxylase buaE to generate 4-hydroxyproline. The PKS-NRPS buaA and trans-enoyl reductase buaC construct the highly reduced polyketide chain, and the condensation (C) domain of buaA then catalyzes the amide bond formation with the activated 4-hydroxyproline. This is followed by the R domain releasing the nascent polyketide-peptide directly via a Dieckmann condensation to afford a tetramic acid fused to the hydroxyproline, generating the bicyclic pyrrolidinedione moiety. The cytochrome P450 monooxygenases buaD and buaG are likely responsible for the multiple hydroxylations on the polyketide chain and its terminus, although in the heterologous context, buaD does not appear to be required. Therefore, while buaG may be a multifunctional cytochrome P450 monooxygenase, it cannot be ruled out that the two secondary alcohols on the polyketide chain could have an acetate origin. Finally, the glycosyltransferase buaB transfers beta-D-mannose to the aglycone burnettramic acid A to form burnettramic acid A. Burnettramic acid B is a minor cis-pyrrolizidine epimer of burnettramic acid A and it is likely that small amounts of it form naturally in acidic environments. The role of the uncharacterized protein buaF in the biosynthesis of burnettramic acids has still to be determined. This is Burnettramic acids biosynthesis cluster protein E from Petromyces alliaceus (Aspergillus alliaceus).